The sequence spans 688 residues: Small ribosomal subunit protein mS39 (688 aa).

The N-terminal 37 residues, methionine 1–tyrosine 37, are a transit peptide targeting the mitochondrion. Lysine 126 carries the N6-acetyllysine modification. PPR repeat units lie at residues isoleucine 149 to valine 183, serine 184 to glutamate 219, asparagine 258 to alanine 292, aspartate 293 to proline 333, asparagine 334 to proline 370, serine 371 to aspartate 412, aspartate 415 to lysine 449, arginine 457 to proline 491, histidine 492 to phenylalanine 526, and proline 575 to proline 609. Residues glycine 667 to lysine 688 form a disordered region.

This sequence belongs to the mitochondrion-specific ribosomal protein mS39 family. Component of the mitochondrial ribosome small subunit (28S) which comprises a 12S rRNA and about 30 distinct proteins. Associated with the 12S mitochondrial rRNA (12S mt-rRNA).

Its subcellular location is the mitochondrion. Mitochondrial RNA-binding protein that has a role in mitochondrial translation. The polypeptide is Small ribosomal subunit protein mS39 (PTCD3) (Bos taurus (Bovine)).